The sequence spans 69 residues: DNA-directed RNA polymerase subunit epsilon (69 aa).

This sequence belongs to the RNA polymerase subunit epsilon family. Monomer. RNAP is composed of a core of 2 alpha, a beta and a beta' subunit. The core is associated with a delta subunit, and at least one of epsilon or omega. When a sigma factor is associated with the core the holoenzyme is formed, which can initiate transcription.

It localises to the cytoplasm. The protein resides in the nucleoid. The catalysed reaction is RNA(n) + a ribonucleoside 5'-triphosphate = RNA(n+1) + diphosphate. Its function is as follows. A non-essential component of RNA polymerase (RNAP). Has a similar structure to bacteriophage T7 protein Gp2 (AC P03704), which is known to bind to RNAP in the DNA binding-cleft. Unlike Gp2 however, this protein does not inhibit transcription initiation. In vitro reconstitution experiments show this subunit is dispensible. The sequence is that of DNA-directed RNA polymerase subunit epsilon from Bacillus subtilis (strain 168).